The following is a 174-amino-acid chain: RNA pyrophosphohydrolase (174 aa).

The Nudix hydrolase domain occupies 6–149 (GFRANVGIII…KRDVYRKVMK (144 aa)). The Nudix box motif lies at 38 to 59 (GGVDDGESAEEAMYRELYEEVG).

It belongs to the Nudix hydrolase family. RppH subfamily. A divalent metal cation serves as cofactor.

In terms of biological role, accelerates the degradation of transcripts by removing pyrophosphate from the 5'-end of triphosphorylated RNA, leading to a more labile monophosphorylated state that can stimulate subsequent ribonuclease cleavage. In Shewanella sp. (strain W3-18-1), this protein is RNA pyrophosphohydrolase.